Reading from the N-terminus, the 391-residue chain is 3-ketoacyl-CoA thiolase (391 aa).

The active-site Acyl-thioester intermediate is Cys-95. Active-site proton acceptor residues include His-347 and Cys-377.

Belongs to the thiolase-like superfamily. Thiolase family. In terms of assembly, heterotetramer of two alpha chains (FadB) and two beta chains (FadA).

It is found in the cytoplasm. It catalyses the reaction an acyl-CoA + acetyl-CoA = a 3-oxoacyl-CoA + CoA. It functions in the pathway lipid metabolism; fatty acid beta-oxidation. Functionally, catalyzes the final step of fatty acid oxidation in which acetyl-CoA is released and the CoA ester of a fatty acid two carbons shorter is formed. The sequence is that of 3-ketoacyl-CoA thiolase from Alcanivorax borkumensis (strain ATCC 700651 / DSM 11573 / NCIMB 13689 / SK2).